A 160-amino-acid chain; its full sequence is Transcription elongation factor GreA (160 aa).

The stretch at 10–37 (TLDGKAKLENELQELKTVKRKEVVERIK) forms a coiled coil.

It belongs to the GreA/GreB family.

Functionally, necessary for efficient RNA polymerase transcription elongation past template-encoded arresting sites. The arresting sites in DNA have the property of trapping a certain fraction of elongating RNA polymerases that pass through, resulting in locked ternary complexes. Cleavage of the nascent transcript by cleavage factors such as GreA or GreB allows the resumption of elongation from the new 3'terminus. GreA releases sequences of 2 to 3 nucleotides. This chain is Transcription elongation factor GreA, found in Listeria innocua serovar 6a (strain ATCC BAA-680 / CLIP 11262).